Consider the following 339-residue polypeptide: Transcription initiation factor IIB (339 aa).

The TFIIB-type zinc-finger motif lies at 39 to 70 (EELICPVCGSKSIIKDYERAEIVCEMCGCVLQ). Cysteine 43, cysteine 46, cysteine 62, and cysteine 65 together coordinate Zn(2+). A run of 2 repeats spans residues 156–239 (SELD…SREL) and 250–331 (DYVP…ELTE).

This sequence belongs to the TFIIB family.

Functionally, stabilizes TBP binding to an archaeal box-A promoter. Also responsible for recruiting RNA polymerase II to the pre-initiation complex (DNA-TBP-TFIIB). The polypeptide is Transcription initiation factor IIB (Methanococcus maripaludis (strain C5 / ATCC BAA-1333)).